The following is a 147-amino-acid chain: Echinoidin (147 aa).

One can recognise a C-type lectin domain in the interval 1–143 (GCCPTFWTSF…STRHYLICKL (143 aa)). 3 cysteine pairs are disulfide-bonded: Cys3–Cys14, Cys31–Cys141, and Cys116–Cys132. O-linked (Hex) serine glycosylation occurs at Ser38. Positions 39–41 (RGD) match the Cell attachment site motif.

Homodimer; disulfide-linked. The identity of the saccharide is not reported in PubMed:3571253, and it is unlikely to be N-acetylgalactosamine. The sugar attached to Ser-38 is represented simply as Hex. Coelemic fluid.

Its subcellular location is the secreted. Functionally, role in the defense system of the organism against microorganisms. This lectin is specific for Gal-GalNAc. The protein is Echinoidin of Heliocidaris crassispina (Sea urchin).